Reading from the N-terminus, the 109-residue chain is Hainantoxin-XVIII-4 (109 aa).

The signal sequence occupies residues 1 to 18; that stretch reads MKLSIIIIATSLVIAVVA. Residues 19 to 46 constitute a propeptide that is removed on maturation; the sequence is FPSKDSKAIENDKTEQRMEIVVQETARA. Intrachain disulfides connect cysteine 55–cysteine 68, cysteine 59–cysteine 108, and cysteine 61–cysteine 81.

The protein belongs to the neurotoxin 25 family. F7 subfamily. In terms of tissue distribution, expressed by the venom gland.

Its subcellular location is the secreted. In terms of biological role, putative ion channel inhibitor. The protein is Hainantoxin-XVIII-4 of Cyriopagopus hainanus (Chinese bird spider).